We begin with the raw amino-acid sequence, 718 residues long: Heat shock 70 kDa protein 7, chloroplastic (718 aa).

Residues 1–92 (MASSAAQIHI…IDLGTTNSAV (92 aa)) constitute a chloroplast transit peptide. Polar residues predominate over residues 668–678 (QIGQSLYNQPQ). The interval 668–718 (QIGQSLYNQPQPGGADSPPGGEASSSSDTSSSAKGGDNGGDVIDADFTDSN) is disordered.

The protein belongs to the heat shock protein 70 (TC 1.A.33) family. DnaK subfamily.

The protein resides in the plastid. It localises to the chloroplast stroma. Acts redundantly with HSP70-6 in the thermotolerance of germinating seeds. Plays an important role in the protein precursor import into chloroplasts. Functionally, in cooperation with other chaperones, Hsp70s are key components that facilitate folding of de novo synthesized proteins, assist translocation of precursor proteins into organelles, and are responsible for degradation of damaged protein under stress conditions. This chain is Heat shock 70 kDa protein 7, chloroplastic (HSP70-7), found in Arabidopsis thaliana (Mouse-ear cress).